The primary structure comprises 308 residues: tRNA pseudouridine synthase B (308 aa).

Asp-33 (nucleophile) is an active-site residue.

It belongs to the pseudouridine synthase TruB family. Type 1 subfamily.

The catalysed reaction is uridine(55) in tRNA = pseudouridine(55) in tRNA. Functionally, responsible for synthesis of pseudouridine from uracil-55 in the psi GC loop of transfer RNAs. This is tRNA pseudouridine synthase B from Nitrosomonas europaea (strain ATCC 19718 / CIP 103999 / KCTC 2705 / NBRC 14298).